Reading from the N-terminus, the 590-residue chain is UvrABC system protein C (590 aa).

Residues 14 to 91 (DQPGCYLMKD…IKKYDPKYNV (78 aa)) form the GIY-YIG domain. Residues 196–231 (NEVKKELEAKMLEASENLQFERAKEFRDQIAHIEST) form the UVR domain.

The protein belongs to the UvrC family. In terms of assembly, interacts with UvrB in an incision complex.

It localises to the cytoplasm. In terms of biological role, the UvrABC repair system catalyzes the recognition and processing of DNA lesions. UvrC both incises the 5' and 3' sides of the lesion. The N-terminal half is responsible for the 3' incision and the C-terminal half is responsible for the 5' incision. The protein is UvrABC system protein C of Bacillus licheniformis (strain ATCC 14580 / DSM 13 / JCM 2505 / CCUG 7422 / NBRC 12200 / NCIMB 9375 / NCTC 10341 / NRRL NRS-1264 / Gibson 46).